A 700-amino-acid polypeptide reads, in one-letter code: AP-1-like transcription factor yap1 (700 aa).

2 disordered regions span residues 17–185 (SPGH…KDLE) and 228–296 (MPVN…VSLR). The short motif at 34–41 (MPVPGRDT) is the Bipartite nuclear localization signal element. Residues 47–59 (PSVSNGSQPSAHQ) show a composition bias toward polar residues. A Bipartite nuclear localization signal motif is present at residues 67–74 (SPTPEMPP). Residues 103–112 (LDDDDDDASD) show a composition bias toward acidic residues. Residues 127–138 (AGRAAAASASGS) show a composition bias toward low complexity. A compositionally biased stretch (basic and acidic residues) spans 150–185 (GDGKRELSKSERRKEQNRAAQKAFRERREAKVKDLE). A bZIP domain is found at 156 to 219 (LSKSERRKEQ…KRLQEENVAL (64 aa)). The interval 158 to 182 (KSERRKEQNRAAQKAFRERREAKVK) is basic motif. The segment at 184–191 (LEDKVAEL) is leucine-zipper. Transcription activation stretches follow at residues 213–400 (QEEN…QPDS) and 452–577 (LGAT…GRGN). The segment covering 231–244 (NSRNSPNSNNGSFS) has biased composition (low complexity). The segment covering 280–296 (SANTISDNSSESLVSLR) has biased composition (polar residues). A n-CRD region spans residues 306–318 (FSDHFNTYALGVV). Disordered stretches follow at residues 320–359 (VPPP…PSAD) and 542–609 (NYLN…KATT). 2 stretches are compositionally biased toward low complexity: residues 335 to 358 (SASN…PPSA) and 542 to 573 (NYLN…NVSS). Residues 589–607 (MGSSRTSVSHDSTDLQGKA) are compositionally biased toward polar residues. Residues 642 to 675 (PSELWMRFGMQHENSTEHLLIDDLCDQMRAKATC) form a c-CRD region. A Nuclear export signal motif is present at residues 660-667 (LLIDDLCD). A disulfide bridge connects residues C666 and C675.

This sequence belongs to the bZIP family. YAP subfamily. Post-translationally, depending on the oxidative stress inducing agent, yap1 can undergo two distinct conformational changes, both involving disulfide bond formation, and both masking the nuclear export signal, thus abolishing nuclear export.

The protein localises to the nucleus. Its subcellular location is the cytoplasm. Functionally, transcription activator involved in oxidative stress response and redox homeostasis. Regulates the transcription of genes encoding antioxidant enzymes and components of the cellular thiol-reducing pathways. Involved in antifungal resistance to fluconazole. This is AP-1-like transcription factor yap1 from Cryptococcus neoformans var. grubii serotype A (strain H99 / ATCC 208821 / CBS 10515 / FGSC 9487) (Filobasidiella neoformans var. grubii).